The sequence spans 221 residues: Chaperone protein TorD (221 aa).

The protein belongs to the TorD/DmsD family. TorD subfamily.

It localises to the cytoplasm. Involved in the biogenesis of TorA. Acts on TorA before the insertion of the molybdenum cofactor and, as a result, probably favors a conformation of the apoenzyme that is competent for acquiring the cofactor. The polypeptide is Chaperone protein TorD (Shewanella pealeana (strain ATCC 700345 / ANG-SQ1)).